Here is a 618-residue protein sequence, read N- to C-terminus: Uptake hydrogenase large subunit (618 aa).

The Ni(2+) site is built by cysteine 75, cysteine 78, cysteine 597, and cysteine 600.

Belongs to the [NiFe]/[NiFeSe] hydrogenase large subunit family. In terms of assembly, heterodimer of a large and a small subunit. It depends on Ni(2+) as a cofactor.

The protein resides in the cell membrane. It catalyses the reaction H2 + A = AH2. This enzyme recycles the H(2) produced by nitrogenase to increase the production of ATP and to protect nitrogenase against inhibition or damage by O(2) under carbon- or phosphate-limited conditions. The sequence is that of Uptake hydrogenase large subunit (hupB) from Rubrivivax gelatinosus (Rhodocyclus gelatinosus).